The primary structure comprises 382 residues: Alkanesulfonate monooxygenase (382 aa).

This sequence belongs to the SsuD family. In terms of assembly, homotetramer.

It catalyses the reaction an alkanesulfonate + FMNH2 + O2 = an aldehyde + FMN + sulfite + H2O + 2 H(+). In terms of biological role, catalyzes the desulfonation of aliphatic sulfonates. This is Alkanesulfonate monooxygenase from Serratia proteamaculans (strain 568).